The chain runs to 361 residues: Serine/threonine-protein kinase SAPK9 (361 aa).

The region spanning 22–278 is the Protein kinase domain; the sequence is YELVKEIGSG…MPEIKNHPWF (257 aa). ATP-binding positions include 28–36 and Lys-51; that span reads IGSGNFGVA. The active-site Proton acceptor is the Asp-141.

The protein belongs to the protein kinase superfamily. Ser/Thr protein kinase family. Interacts with BZIP46. In terms of processing, may be phosphorylated. In terms of tissue distribution, expressed in leaf sheaths and roots. Expressed in shoots of young seedlings.

The protein localises to the cytoplasm. Its subcellular location is the nucleus. The enzyme catalyses L-seryl-[protein] + ATP = O-phospho-L-seryl-[protein] + ADP + H(+). It carries out the reaction L-threonyl-[protein] + ATP = O-phospho-L-threonyl-[protein] + ADP + H(+). Activated by hyperosmotic stress and abscisic acid (ABA). May play a role in signal transduction of hyperosmotic response. Can phosphorylate BZIP46 in vitro. The chain is Serine/threonine-protein kinase SAPK9 (SAPK9) from Oryza sativa subsp. japonica (Rice).